The sequence spans 620 residues: Chaperone protein HscA homolog (620 aa).

This sequence belongs to the heat shock protein 70 family.

In terms of biological role, chaperone involved in the maturation of iron-sulfur cluster-containing proteins. Has a low intrinsic ATPase activity which is markedly stimulated by HscB. The protein is Chaperone protein HscA homolog of Shewanella sp. (strain ANA-3).